The primary structure comprises 970 residues: Longitudinals lacking protein, isoforms F/I/K/T (970 aa).

The BTB domain maps to 32-97; it reads VDCTLAAEGK…MYRGEVNISQ (66 aa). Disordered regions lie at residues 115–200, 228–340, 447–468, and 790–843; these read LSDN…SSVL, SSGP…ASAS, DAQQ…EGAQ, and QTVH…LQDD. 4 stretches are compositionally biased toward low complexity: residues 162-175, 228-251, 263-293, and 329-340; these read SGDV…SSSP, SSGP…LTST, TSST…QTTS, and NSATGPNPASAS. Polar residues-rich tracts occupy residues 447–456 and 808–818; these read DAQQRDPQAS and QLQTHHIQTVV. Low complexity predominate over residues 819 to 828; sequence QSSSGQQQHD. The C2H2-type 1; degenerate zinc finger occupies 903 to 925; sequence YVCRHCGKKYRWKSTLRRHENVE. The C2H2-type 2 zinc finger occupies 933-955; the sequence is HPCPYCSYKAKQRGNLGVHVRKH.

In terms of tissue distribution, by stage 11, isoform F is expressed throughout the mesoderm whereas isoform T, and at low levels isoform I, is expressed throughout the ectoderm. Isoform K is expressed in both mesoderm and ectoderm. Expression becomes restricted during later stages; starting from stage 14 to 15, isoform F is expressed in the gut. Isoform I is expressed in the CNS. Isoform I and isoform F show expression in the epithelium starting at stage 14, though for isoform I the CNS expression remains predominant. Expression is also seen in specific types of cells in the embryo; isoform K is expressed in the ventral furrow at stage 5 and in a dynamic pattern in the ventral neurogenic region starting at stage 7. Isoform T is expressed around the tracheal pits at stage 11. Isoform F shows transient enrichment in a dorsal cell layer in the CNS at stages 13 and 14.

The protein resides in the nucleus. Putative transcription factor required for axon growth and guidance in the central and peripheral nervous systems. Repels CNS axons away from the midline by promoting the expression of the midline repellent sli and its receptor robo. The protein is Longitudinals lacking protein, isoforms F/I/K/T of Drosophila melanogaster (Fruit fly).